Reading from the N-terminus, the 621-residue chain is MRPAQTNQFDYVKIGLASPERIRQWGERTLPNGQVVGEVTKPETINYRTLKPEMDGLFCERIFGPKDWECHCGKYKESVIEVLSVSAVVLEVTESRVRRHRMGYIKLAAPVAHVGYSKAFLAIFHSVGYALRDVEQIVYFNSYVVLSPGNAETLTYKQLLSEDQWLEIEDQIYSEDSLLQGVEVGIGAEALLRLLADINLEQEAESLREEIGNAKGQKRAKLIKRLRVIDNFIATGSKPEWMVMAVIPVIPPDLRPMVQLDGGRFATSDLNDLYRRVINRNNRLARLQEILAPEIIVRNEKRMLQEAVDALIDNGRRGRTVVGANNRPLKSLSDIIEGKQGRFRQNLLGKRVDYSGRSVIVVGPKLKIHQCGLPREMAIELFQPFVINRLIRSGMVIHQAAPMISRNDPSVWDVLEEVIEGHPVMLNRAPTLHRLGIQSFEPILVEGRAIQLHPLVCPAFNADFDGDQMAVHVPLSLESQAEARLLMLASNNILSPATGKPIITPSQDMVLGAYYLTAENPGATKGAGKYFSSLEDVIMAFQQEQIDLHAYIYVRFDGEIESDQPDTEPVKVTENEDGTRTLLYKFRRVRQDAKGNVLSQYIYTTPGRVIYNNAIQEALAS.

Positions 463, 465, and 467 each coordinate Mg(2+).

This sequence belongs to the RNA polymerase beta' chain family. RpoC1 subfamily. As to quaternary structure, in cyanobacteria the RNAP catalytic core is composed of 2 alpha, 1 beta, 1 beta', 1 gamma and 1 omega subunit. When a sigma factor is associated with the core the holoenzyme is formed, which can initiate transcription. Requires Mg(2+) as cofactor.

It carries out the reaction RNA(n) + a ribonucleoside 5'-triphosphate = RNA(n+1) + diphosphate. In terms of biological role, DNA-dependent RNA polymerase catalyzes the transcription of DNA into RNA using the four ribonucleoside triphosphates as substrates. This is DNA-directed RNA polymerase subunit gamma from Nostoc commune.